The following is a 330-amino-acid chain: Carbonic anhydrase 1 (330 aa).

The interval 1 to 109 is chloroplast transit peptide-like; the sequence is MSTASAFAIN…AAARIDQITA (109 aa).

Belongs to the beta-class carbonic anhydrase family. As to quaternary structure, homohexamer.

It is found in the cytoplasm. It carries out the reaction hydrogencarbonate + H(+) = CO2 + H2O. Functionally, reversible hydration of carbon dioxide. This is Carbonic anhydrase 1 from Flaveria linearis (Narrowleaf yellowtops).